We begin with the raw amino-acid sequence, 702 residues long: DnaJ homolog subfamily C member 14 (702 aa).

Disordered regions lie at residues 1 to 148 (MAQK…GGNG) and 165 to 229 (DELE…KRSQ). A compositionally biased stretch (pro residues) spans 75–84 (HGPPGGPGPP). Residues 88 to 103 (EDPDQSETSSEEESGV) are compositionally biased toward acidic residues. Positions 113–133 (TGNQKDGNSFLSIPSACNCQG) are enriched in polar residues. The segment covering 165 to 175 (DELEEEYDDEE) has biased composition (acidic residues). Over residues 192-201 (PPSRRQRHRF) the composition is skewed to basic residues. Residues 202 to 217 (PTKEDTREGGRRDPRS) show a composition bias toward basic and acidic residues. The span at 218-227 (PGRHRLGRKR) shows a compositional bias: basic residues. 3 consecutive transmembrane segments (helical) span residues 250–270 (AGFW…ETCG), 300–320 (GWAQ…VGLF), and 326–346 (LLGA…QLGW). The J domain occupies 443–507 (NPFHVLGVEA…EKRKEYEMKR (65 aa)). Positions 658 to 702 (MPNGNFFAAPQPAPGAAAASKPNSTVPKGEAKPKRRKKVRRPFQR) are disordered. A compositionally biased stretch (low complexity) spans 659 to 676 (PNGNFFAAPQPAPGAAAA). The segment covering 690–702 (PKRRKKVRRPFQR) has biased composition (basic residues).

Interacts with the FxxxFxxxF motif of DRD1 via its C-terminal domain. Highly expressed in pancreas and selectively expressed in brain, lung, liver, skeletal muscle and kidney.

It is found in the endoplasmic reticulum membrane. In terms of biological role, regulates the export of target proteins, such as DRD1, from the endoplasmic reticulum to the cell surface. The polypeptide is DnaJ homolog subfamily C member 14 (DNAJC14) (Homo sapiens (Human)).